The following is a 325-amino-acid chain: Small ribosomal subunit protein uS4m (325 aa).

The 64-residue stretch at K146 to K209 folds into the S4 RNA-binding domain.

This sequence belongs to the universal ribosomal protein uS4 family.

Its subcellular location is the mitochondrion. The chain is Small ribosomal subunit protein uS4m (mrps4) from Dictyostelium citrinum (Slime mold).